A 1061-amino-acid chain; its full sequence is DNA polymerase (1061 aa).

Positions 773–792 (NSEAEESDEDQGPAPFYSPP) are disordered.

It belongs to the DNA polymerase type-B family. Heterodimer with the terminal protein; this heterodimer binds to bp 9 to 18 of the genome. Forms a complex with viral pTP, DBP and hosts NFIA and POU2F1/OCT1 for initiation of replication.

It is found in the host nucleus. It catalyses the reaction DNA(n) + a 2'-deoxyribonucleoside 5'-triphosphate = DNA(n+1) + diphosphate. Its function is as follows. Eukaryotic-type DNA polymerase involved in viral genomic replication. DNA synthesis is protein primed, and acts in a strand displacement replication. Assembles in complex with viral pTP, DBP, host NFIA and host POU2F1/OCT1 on viral origin of replication. The polymerase covalently transfers dCMP onto pTP, thereby initiating complementary strand synthesis. This chain is DNA polymerase, found in Human adenovirus A serotype 12 (HAdV-12).